The following is a 442-amino-acid chain: Tryptophan synthase beta chain 2 (442 aa).

Residue Lys-122 is modified to N6-(pyridoxal phosphate)lysine.

The protein belongs to the TrpB family. In terms of assembly, tetramer of two alpha and two beta chains. The cofactor is pyridoxal 5'-phosphate.

It catalyses the reaction (1S,2R)-1-C-(indol-3-yl)glycerol 3-phosphate + L-serine = D-glyceraldehyde 3-phosphate + L-tryptophan + H2O. It participates in amino-acid biosynthesis; L-tryptophan biosynthesis; L-tryptophan from chorismate: step 5/5. Functionally, the beta subunit is responsible for the synthesis of L-tryptophan from indole and L-serine. The sequence is that of Tryptophan synthase beta chain 2 (trpB2) from Methanosarcina mazei (strain ATCC BAA-159 / DSM 3647 / Goe1 / Go1 / JCM 11833 / OCM 88) (Methanosarcina frisia).